The following is a 301-amino-acid chain: Multifunctional dioxygenase prhA (301 aa).

Fe cation-binding residues include His-130, Asp-132, and His-214.

The protein belongs to the PhyH family. In terms of assembly, homodimer. Requires Fe cation as cofactor.

It carries out the reaction preaustinoid A1 + 2-oxoglutarate + O2 = berkeleyone B + succinate + CO2 + H2O. It catalyses the reaction berkeleyone B + 2-oxoglutarate + O2 = berkeleydione + succinate + CO2 + H2O. The enzyme catalyses preaustinoid A + 2 2-oxoglutarate + 2 O2 = berkeleytrione + 2 succinate + 2 CO2 + H2O. Its pathway is secondary metabolite biosynthesis; terpenoid biosynthesis. Multifunctional dioxygenase; part of the gene cluster that mediates the biosynthesis of paraherquonin, a meroterpenoid with a unique, highly congested hexacyclic molecular architecture. The first step of the pathway is the synthesis of 3,5-dimethylorsellinic acid (DMOA) by the polyketide synthase prhL. Synthesis of DMOA is followed by farnesylation by the prenyltransferase prhE, methylesterification by the methyl-transferase prhM, epoxidation of the prenyl chain by the flavin-dependent monooxygenase prhF, and cyclization of the farnesyl moiety by the terpene cyclase prhH, to yield the tetracyclic intermediate, protoaustinoid A. The short chain dehydrogenase prhI then oxidizes the C-3 alcohol group of the terpene cyclase product to transform protoaustinoid A into protoaustinoid B. The FAD-binding monooxygenase prhJ catalyzes the oxidation of protoaustinoid B into preaustinoid A which is further oxidized into preaustinoid A1 by FAD-binding monooxygenase phrK. Finally, prhA leads to berkeleydione via the berkeleyone B intermediate. PrhA is a multifunctional dioxygenase that first desaturates at C5-C6 to form berkeleyone B, followed by rearrangement of the A/B-ring to form the cycloheptadiene moiety in berkeleydione. Berkeleydione serves as the key intermediate for the biosynthesis of paraherquonin as well as many other meroterpenoids. The cytochrome P450 monooxygenases prhB, prhD, and prhN, as well as the isomerase prhC, are probably involved in the late stage of paraherquonin biosynthesis, after the production of berkeleydione. Especially prhC might be a multifunctional enzyme that catalyzes the D-ring expansion via intramolecular methoxy rearrangement, as well as the hydrolysis of the expanded D-ring. This is Multifunctional dioxygenase prhA from Penicillium brasilianum.